Here is a 337-residue protein sequence, read N- to C-terminus: Outer membrane protein assembly factor BamC (337 aa).

The N-terminal stretch at 1–16 (MKKWLFPFAFVATLAG) is a signal peptide. The N-palmitoyl cysteine moiety is linked to residue Cys17. Cys17 is lipidated: S-diacylglycerol cysteine.

The protein belongs to the BamC family. Part of the Bam complex.

It localises to the cell outer membrane. In terms of biological role, part of the outer membrane protein assembly complex, which is involved in assembly and insertion of beta-barrel proteins into the outer membrane. The sequence is that of Outer membrane protein assembly factor BamC from Pasteurella multocida (strain Pm70).